A 531-amino-acid chain; its full sequence is Dihydropyrimidinase (531 aa).

Zn(2+)-binding residues include histidine 103, histidine 105, and lysine 193. N6-carboxylysine is present on lysine 193. Tyrosine 198 provides a ligand contact to substrate. Zn(2+)-binding residues include histidine 226 and histidine 282. Serine 332 serves as a coordination point for substrate. A Zn(2+)-binding site is contributed by aspartate 359. Residue asparagine 380 participates in substrate binding.

It belongs to the metallo-dependent hydrolases superfamily. Hydantoinase/dihydropyrimidinase family. Homotetramer. Zn(2+) serves as cofactor. Carboxylation allows a single lysine to coordinate two zinc ions.

It localises to the endoplasmic reticulum. The enzyme catalyses 5,6-dihydrouracil + H2O = 3-(carbamoylamino)propanoate + H(+). Its pathway is amino-acid biosynthesis; beta-alanine biosynthesis. Its function is as follows. Catalyzes the second step of the reductive pyrimidine degradation, the reversible hydrolytic ring opening of dihydropyrimidines. Can catalyze the ring opening of 5,6-dihydrouracil to N-carbamoyl-alanine and of 5,6-dihydrothymine to N-carbamoyl-amino isobutyrate. Involved in the recycling of nitrogen from nucleobases to general nitrogen metabolism. The chain is Dihydropyrimidinase from Arabidopsis thaliana (Mouse-ear cress).